A 364-amino-acid chain; its full sequence is Urease accessory protein UreD (364 aa).

Disordered regions lie at residues 1 to 37 (MDQDRSGAADAGNPDPGRGPAGSAEARNGAAAASSPA) and 201 to 250 (PPEV…AGER). Composition is skewed to low complexity over residues 21 to 37 (AGSAEARNGAAAASSPA), 209 to 218 (APDRGAPAAE), and 236 to 248 (AASSGGTGAAPAG).

The protein belongs to the UreD family. In terms of assembly, ureD, UreF and UreG form a complex that acts as a GTP-hydrolysis-dependent molecular chaperone, activating the urease apoprotein by helping to assemble the nickel containing metallocenter of UreC. The UreE protein probably delivers the nickel.

It is found in the cytoplasm. In terms of biological role, required for maturation of urease via the functional incorporation of the urease nickel metallocenter. The protein is Urease accessory protein UreD of Kocuria rhizophila (strain ATCC 9341 / DSM 348 / NBRC 103217 / DC2201).